The following is a 504-amino-acid chain: Cytochrome P450 4A2 (504 aa).

Positions 1–4 (MGFS) are excised as a propeptide. A heme-binding site is contributed by Glu-315. Phosphoserine is present on Ser-434. Residue Cys-451 participates in heme binding.

Belongs to the cytochrome P450 family. The cofactor is heme.

It localises to the endoplasmic reticulum membrane. It is found in the microsome membrane. The enzyme catalyses an omega-methyl-long-chain fatty acid + reduced [NADPH--hemoprotein reductase] + O2 = an omega-hydroxy-long-chain fatty acid + oxidized [NADPH--hemoprotein reductase] + H2O + H(+). It catalyses the reaction dodecanoate + reduced [NADPH--hemoprotein reductase] + O2 = (11R)-hydroxydodecanoate + oxidized [NADPH--hemoprotein reductase] + H2O + H(+). It carries out the reaction dodecanoate + reduced [NADPH--hemoprotein reductase] + O2 = 12-hydroxydodecanoate + oxidized [NADPH--hemoprotein reductase] + H2O + H(+). The catalysed reaction is tetradecanoate + reduced [NADPH--hemoprotein reductase] + O2 = 14-hydroxytetradecanoate + oxidized [NADPH--hemoprotein reductase] + H2O + H(+). The enzyme catalyses hexadecanoate + reduced [NADPH--hemoprotein reductase] + O2 = 16-hydroxyhexadecanoate + oxidized [NADPH--hemoprotein reductase] + H2O + H(+). The protein operates within lipid metabolism; fatty acid metabolism. Its function is as follows. A cytochrome P450 monooxygenase that catalyzes omega and omega-1 hydroxylation of saturated fatty acids. Exhibits preferential omega versus omega-1 regioselectivity and (R) versus (S) stereoselectivity for hydroxylation of lauric and myristic acids. Has low activity toward palmitic acid. Mechanistically, uses molecular oxygen inserting one oxygen atom into a substrate, and reducing the second into a water molecule, with two electrons provided by NADPH via cytochrome P450 reductase (CPR; NADPH-ferrihemoprotein reductase). In Rattus norvegicus (Rat), this protein is Cytochrome P450 4A2.